Consider the following 273-residue polypeptide: Putative phosphoenolpyruvate synthase regulatory protein (273 aa).

154-161 (GVSRSGKT) is a binding site for ADP.

It belongs to the pyruvate, phosphate/water dikinase regulatory protein family. PSRP subfamily.

The catalysed reaction is [pyruvate, water dikinase] + ADP = [pyruvate, water dikinase]-phosphate + AMP + H(+). The enzyme catalyses [pyruvate, water dikinase]-phosphate + phosphate + H(+) = [pyruvate, water dikinase] + diphosphate. Bifunctional serine/threonine kinase and phosphorylase involved in the regulation of the phosphoenolpyruvate synthase (PEPS) by catalyzing its phosphorylation/dephosphorylation. The protein is Putative phosphoenolpyruvate synthase regulatory protein of Halorhodospira halophila (strain DSM 244 / SL1) (Ectothiorhodospira halophila (strain DSM 244 / SL1)).